The following is a 499-amino-acid chain: Glutelin type-A 1 (499 aa).

Positions 1–24 (MASINRPIVFFTVCLFLLCNGSLA) are cleaved as a signal peptide. 2 cysteine pairs are disulfide-bonded: Cys-46-Cys-79 and Cys-122-Cys-313. Cupin type-1 domains lie at 51–248 (LQAF…QVAR) and 319–468 (QNID…EEAQ).

It belongs to the 11S seed storage protein (globulins) family. In terms of assembly, hexamer; each subunit is composed of an acidic and a basic chain derived from a single precursor and linked by a disulfide bond.

Its function is as follows. Seed storage protein. This is Glutelin type-A 1 (GLUA1) from Oryza sativa subsp. japonica (Rice).